Here is a 361-residue protein sequence, read N- to C-terminus: Holliday junction branch migration complex subunit RuvB (361 aa).

Basic and acidic residues-rich tracts occupy residues 1–13 (MSDV…KLPE) and 33–43 (QGEHDIERSLR). The tract at residues 1-43 (MSDVERTEFKLPEGMDLSSPPQRNQDVDAAEQQGEHDIERSLR) is disordered. The tract at residues 2 to 203 (SDVERTEFKL…FGFTAQMEYY (202 aa)) is large ATPase domain (RuvB-L). Residues L42, R43, G84, K87, T88, T89, 150–152 (EDF), R193, Y203, and R240 each bind ATP. Mg(2+) is bound at residue T88. Positions 204-274 (DTEDLTRVIS…AAQAALRVFD (71 aa)) are small ATPAse domain (RuvB-S). A head domain (RuvB-H) region spans residues 277 to 361 (ERGLDRLDRA…PEGAIGGTLF (85 aa)). 2 residues coordinate DNA: R332 and R337.

It belongs to the RuvB family. Homohexamer. Forms an RuvA(8)-RuvB(12)-Holliday junction (HJ) complex. HJ DNA is sandwiched between 2 RuvA tetramers; dsDNA enters through RuvA and exits via RuvB. An RuvB hexamer assembles on each DNA strand where it exits the tetramer. Each RuvB hexamer is contacted by two RuvA subunits (via domain III) on 2 adjacent RuvB subunits; this complex drives branch migration. In the full resolvosome a probable DNA-RuvA(4)-RuvB(12)-RuvC(2) complex forms which resolves the HJ.

It is found in the cytoplasm. The enzyme catalyses ATP + H2O = ADP + phosphate + H(+). Functionally, the RuvA-RuvB-RuvC complex processes Holliday junction (HJ) DNA during genetic recombination and DNA repair, while the RuvA-RuvB complex plays an important role in the rescue of blocked DNA replication forks via replication fork reversal (RFR). RuvA specifically binds to HJ cruciform DNA, conferring on it an open structure. The RuvB hexamer acts as an ATP-dependent pump, pulling dsDNA into and through the RuvAB complex. RuvB forms 2 homohexamers on either side of HJ DNA bound by 1 or 2 RuvA tetramers; 4 subunits per hexamer contact DNA at a time. Coordinated motions by a converter formed by DNA-disengaged RuvB subunits stimulates ATP hydrolysis and nucleotide exchange. Immobilization of the converter enables RuvB to convert the ATP-contained energy into a lever motion, pulling 2 nucleotides of DNA out of the RuvA tetramer per ATP hydrolyzed, thus driving DNA branch migration. The RuvB motors rotate together with the DNA substrate, which together with the progressing nucleotide cycle form the mechanistic basis for DNA recombination by continuous HJ branch migration. Branch migration allows RuvC to scan DNA until it finds its consensus sequence, where it cleaves and resolves cruciform DNA. This chain is Holliday junction branch migration complex subunit RuvB, found in Corynebacterium aurimucosum (strain ATCC 700975 / DSM 44827 / CIP 107346 / CN-1) (Corynebacterium nigricans).